Consider the following 276-residue polypeptide: Formamidopyrimidine-DNA glycosylase (276 aa).

The active-site Schiff-base intermediate with DNA is the Pro-2. The active-site Proton donor is Glu-3. The active-site Proton donor; for beta-elimination activity is the Lys-58. DNA-binding residues include His-94, Arg-112, and Arg-157. The FPG-type zinc finger occupies 242–276 (FVYDRAGLPCRVCGTPIKQIVQGQRSTYFCPTCQR). Catalysis depends on Arg-266, which acts as the Proton donor; for delta-elimination activity.

Belongs to the FPG family. As to quaternary structure, monomer. Zn(2+) is required as a cofactor.

It catalyses the reaction Hydrolysis of DNA containing ring-opened 7-methylguanine residues, releasing 2,6-diamino-4-hydroxy-5-(N-methyl)formamidopyrimidine.. The enzyme catalyses 2'-deoxyribonucleotide-(2'-deoxyribose 5'-phosphate)-2'-deoxyribonucleotide-DNA = a 3'-end 2'-deoxyribonucleotide-(2,3-dehydro-2,3-deoxyribose 5'-phosphate)-DNA + a 5'-end 5'-phospho-2'-deoxyribonucleoside-DNA + H(+). Involved in base excision repair of DNA damaged by oxidation or by mutagenic agents. Acts as a DNA glycosylase that recognizes and removes damaged bases. Has a preference for oxidized purines, such as 7,8-dihydro-8-oxoguanine (8-oxoG). Has AP (apurinic/apyrimidinic) lyase activity and introduces nicks in the DNA strand. Cleaves the DNA backbone by beta-delta elimination to generate a single-strand break at the site of the removed base with both 3'- and 5'-phosphates. This Paraburkholderia phytofirmans (strain DSM 17436 / LMG 22146 / PsJN) (Burkholderia phytofirmans) protein is Formamidopyrimidine-DNA glycosylase.